The chain runs to 231 residues: Probable amino-acid ABC transporter permease protein y4tG (231 aa).

A run of 6 helical transmembrane segments spans residues Thr9–Ile29, Leu32–Leu52, Ala64–Tyr84, Val86–Ile106, Tyr161–Leu181, and Val196–Val216. Residues Leu28–Arg217 enclose the ABC transmembrane type-1 domain.

The protein belongs to the binding-protein-dependent transport system permease family. HisMQ subfamily.

The protein resides in the cell inner membrane. Probably part of the binding-protein-dependent transport system y4tEFGH for an amino acid. Probably responsible for the translocation of the substrate across the membrane. The chain is Probable amino-acid ABC transporter permease protein y4tG from Sinorhizobium fredii (strain NBRC 101917 / NGR234).